The following is a 144-amino-acid chain: Superoxide dismutase [Mn] 1 (144 aa).

Mn(2+)-binding residues include His42, Asp124, and His128.

Belongs to the iron/manganese superoxide dismutase family. Requires Mn(2+) as cofactor.

The catalysed reaction is 2 superoxide + 2 H(+) = H2O2 + O2. Destroys superoxide anion radicals which are normally produced within the cells and which are toxic to biological systems. This Haloferax mediterranei (Halobacterium mediterranei) protein is Superoxide dismutase [Mn] 1 (sod1).